Here is a 1096-residue protein sequence, read N- to C-terminus: Protein transport protein SEC24 B (1096 aa).

The interval 1-315 is disordered; sequence MAAPVPPGAY…SAPGTPGSIY (315 aa). A compositionally biased stretch (low complexity) spans 12–23; the sequence is PNNNQQNSGGPP. Over residues 27–45 the composition is skewed to polar residues; that stretch reads PGSQGNPNSLAANMQNLNI. The span at 47-64 shows a compositional bias: pro residues; it reads RPPPPMPGSGPRPSPPFG. Positions 65–78 are enriched in low complexity; the sequence is QSPQSFPQQQQQQP. Residues 79-92 show a composition bias toward pro residues; that stretch reads RPSPMARPGPPPPA. Positions 93–107 are enriched in low complexity; the sequence is AMARPGGPPQVSQPG. The span at 108–122 shows a compositional bias: pro residues; the sequence is GFPPVGRPVAPPSNQ. The segment covering 140–149 has biased composition (low complexity); that stretch reads SFPQPGGFPA. Composition is skewed to pro residues over residues 150-160, 171-186, 246-258, and 287-303; these read SGPPGGVPSGP, SPPP…PPSG, MAPP…PPNA, and GRPP…PPQQ. 4 residues coordinate Zn(2+): Cys-433, Cys-436, Cys-455, and Cys-458. Residues 433–458 are zinc finger-like; that stretch reads CSRCKGYVNPFMKFIDQGRKFICNLC.

It belongs to the SEC23/SEC24 family. SEC24 subfamily. As to quaternary structure, component of the coat protein complex II (COPII), composed of at least five proteins: the Sec23/24 complex, the Sec13/31 complex and Sar1. Mainly expressed in pollen, roots, stems, petioles and hypocotyls, and, to a lower extent, in leaves and cotyledons.

Its subcellular location is the cytoplasmic vesicle. The protein resides in the COPII-coated vesicle membrane. It is found in the endoplasmic reticulum membrane. The protein localises to the golgi apparatus membrane. Functionally, component of the coat protein complex II (COPII), that covers ER-derived vesicles involved in transport from the endoplasmic reticulum to the Golgi apparatus. COPII is composed of at least five proteins: the SEC23/24 complex, the SEC13/31 complex, and the protein SAR1. Acts in the cytoplasm to promote the transport of secretory, plasma membrane, and vacuolar proteins from the endoplasmic reticulum to the Golgi complex. This is Protein transport protein SEC24 B from Arabidopsis thaliana (Mouse-ear cress).